Here is a 363-residue protein sequence, read N- to C-terminus: Phosphoserine aminotransferase (363 aa).

Residue Arg41 participates in L-glutamate binding. Residues 75-76 (AS), Trp100, Thr155, Asp175, and Gln198 contribute to the pyridoxal 5'-phosphate site. Position 199 is an N6-(pyridoxal phosphate)lysine (Lys199). 239 to 240 (NT) is a binding site for pyridoxal 5'-phosphate.

Belongs to the class-V pyridoxal-phosphate-dependent aminotransferase family. SerC subfamily. In terms of assembly, homodimer. Requires pyridoxal 5'-phosphate as cofactor.

It is found in the cytoplasm. It catalyses the reaction O-phospho-L-serine + 2-oxoglutarate = 3-phosphooxypyruvate + L-glutamate. The catalysed reaction is 4-(phosphooxy)-L-threonine + 2-oxoglutarate = (R)-3-hydroxy-2-oxo-4-phosphooxybutanoate + L-glutamate. It functions in the pathway amino-acid biosynthesis; L-serine biosynthesis; L-serine from 3-phospho-D-glycerate: step 2/3. Catalyzes the reversible conversion of 3-phosphohydroxypyruvate to phosphoserine and of 3-hydroxy-2-oxo-4-phosphonooxybutanoate to phosphohydroxythreonine. The polypeptide is Phosphoserine aminotransferase (Streptococcus suis (strain 98HAH33)).